A 410-amino-acid chain; its full sequence is Putative formamidase C869.04 (410 aa).

This sequence belongs to the acetamidase/formamidase family. In terms of assembly, homotrimer.

The protein resides in the cytoplasm. It is found in the nucleus. The catalysed reaction is formamide + H2O = formate + NH4(+). In terms of biological role, hydrolyzes formamide with the production of ammonia which can be used as a source of nitrogen for growth. May also act on acetamide, propanamide and butanamide. This Schizosaccharomyces pombe (strain 972 / ATCC 24843) (Fission yeast) protein is Putative formamidase C869.04.